Consider the following 439-residue polypeptide: Phosphomethylpyrimidine synthase (439 aa).

Substrate-binding positions include Asn67, Met96, Tyr126, His165, 187–189, 228–231, and Glu267; these read SRG and DSLR. Zn(2+) is bound at residue His271. Substrate is bound at residue Tyr294. His335 is a binding site for Zn(2+). Positions 411, 414, and 418 each coordinate [4Fe-4S] cluster.

The protein belongs to the ThiC family. It depends on [4Fe-4S] cluster as a cofactor.

The enzyme catalyses 5-amino-1-(5-phospho-beta-D-ribosyl)imidazole + S-adenosyl-L-methionine = 4-amino-2-methyl-5-(phosphooxymethyl)pyrimidine + CO + 5'-deoxyadenosine + formate + L-methionine + 3 H(+). It functions in the pathway cofactor biosynthesis; thiamine diphosphate biosynthesis. Its function is as follows. Catalyzes the synthesis of the hydroxymethylpyrimidine phosphate (HMP-P) moiety of thiamine from aminoimidazole ribotide (AIR) in a radical S-adenosyl-L-methionine (SAM)-dependent reaction. The sequence is that of Phosphomethylpyrimidine synthase from Ignicoccus hospitalis (strain KIN4/I / DSM 18386 / JCM 14125).